The primary structure comprises 164 residues: Large ribosomal subunit protein bL9 (164 aa).

It belongs to the bacterial ribosomal protein bL9 family.

Its function is as follows. Binds to the 23S rRNA. This Borrelia duttonii (strain Ly) protein is Large ribosomal subunit protein bL9.